We begin with the raw amino-acid sequence, 284 residues long: Nucleotide-binding protein Shewmr4_0670 (284 aa).

8–15 (GRSGSGKS) provides a ligand contact to ATP. Residue 56–59 (DVRN) coordinates GTP.

The protein belongs to the RapZ-like family.

Its function is as follows. Displays ATPase and GTPase activities. The chain is Nucleotide-binding protein Shewmr4_0670 from Shewanella sp. (strain MR-4).